The sequence spans 209 residues: Small ribosomal subunit protein uS3 (209 aa).

A KH type-2 domain is found at 38–107 (IRKVVKNAYS…RVIVNVEEIK (70 aa)).

Belongs to the universal ribosomal protein uS3 family. Part of the 30S ribosomal subunit. Forms a tight complex with proteins S10 and S14.

Binds the lower part of the 30S subunit head. Binds mRNA in the 70S ribosome, positioning it for translation. The protein is Small ribosomal subunit protein uS3 of Pseudothermotoga lettingae (strain ATCC BAA-301 / DSM 14385 / NBRC 107922 / TMO) (Thermotoga lettingae).